The sequence spans 749 residues: Myosin-binding protein 2 (749 aa).

A helical membrane pass occupies residues 17–37 (ITLILVYAFLEWSLIFFILLN). Residues 164–184 (NLNDSQEETEEKKVPQSHEKL) are disordered. Over residues 173 to 184 (EEKKVPQSHEKL) the composition is skewed to basic and acidic residues. Residues 411–509 (LTVDKLKFEL…ELEKELEVYR (99 aa)) enclose the GTD-binding domain. Residues 589–621 (ERLSILGRLKFLEEKLTDLNNEEDDEEEAKTFE) are a coiled coil. Residues 608 to 640 (NNEEDDEEEAKTFESNGSINGNEHIHGKETNGK) form a disordered region. The span at 630–639 (EHIHGKETNG) shows a compositional bias: basic and acidic residues. Positions 676-710 (DSEKGENVTIEEEVDELYERLEALEADREFLRHCV) form a coiled coil.

Interacts with myosin XI-K and XI-1. As to expression, expressed in leaf epidermal cells, roots and root hairs.

It localises to the endomembrane system. Membrane-anchored myosin receptors that define a distinct, plant-specific transport vesicle compartment. The protein is Myosin-binding protein 2 of Arabidopsis thaliana (Mouse-ear cress).